Consider the following 996-residue polypeptide: Poly [ADP-ribose] polymerase (996 aa).

A DNA-binding region spans residues 1–369; the sequence is MEIDLPFKVE…TSTILKNISL (369 aa). 2 consecutive PARP-type zinc fingers follow at residues 7–89 and 114–203; these read FKVE…DNCT and FGIE…PVIK. Zn(2+) is bound by residues C19, C22, H51, C54, C126, C129, H161, and C164. Short sequence motifs (nuclear localization signal) lie at residues 211 to 214 and 232 to 235; these read KKAK and KIKK. In terms of domain architecture, PADR1 zinc-binding spans 220–358; sequence EEDAASIKEL…EVRAIRYIPP (139 aa). The tract at residues 286–329 is zinc ribbon; the sequence is GALLPCTDCKGRQLLFHKSGYLCNGDLTEWTKCTKLLKEPERKS. The Zn(2+) site is built by C291, C294, C308, and C318. The interval 370 to 507 is automodification domain; it reads KKGDELDGPK…SIYTKSVPKS (138 aa). The BRCT domain occupies 382 to 473; the sequence is RERPPLYNIE…AGAINYISSM (92 aa). The WGR domain maps to 527–625; the sequence is VAHVYVSRNK…ENFVKVAGRM (99 aa). One can recognise a PARP alpha-helical domain in the interval 647–764; that stretch reads KSKLPLSVQD…EIECAYSLLQ (118 aa). Residues 773–996 enclose the PARP catalytic domain; it reads NPIDKHYEQL…YMLRMNFKYK (224 aa).

It belongs to the ARTD/PARP family.

Its subcellular location is the nucleus. The enzyme catalyses NAD(+) + (ADP-D-ribosyl)n-acceptor = nicotinamide + (ADP-D-ribosyl)n+1-acceptor + H(+).. The catalysed reaction is L-aspartyl-[protein] + NAD(+) = 4-O-(ADP-D-ribosyl)-L-aspartyl-[protein] + nicotinamide. It carries out the reaction L-glutamyl-[protein] + NAD(+) = 5-O-(ADP-D-ribosyl)-L-glutamyl-[protein] + nicotinamide. Functionally, poly-ADP-ribosyltransferase that mediates poly-ADP-ribosylation of proteins and plays a key role in DNA repair. Mainly mediates glutamate and aspartate ADP-ribosylation of target proteins: the ADP-D-ribosyl group of NAD(+) is transferred to the acceptor carboxyl group of glutamate and aspartate residues and further ADP-ribosyl groups are transferred to the 2'-position of the terminal adenosine moiety, building up a polymer with an average chain length of 20-30 units. This Sarcophaga peregrina (Flesh fly) protein is Poly [ADP-ribose] polymerase.